The following is a 368-amino-acid chain: Cytochrome b (368 aa).

The next 4 helical transmembrane spans lie at 32–52, 76–98, 112–132, and 174–194; these read FGFLVAMTFVLQIITGITLAF, WEFRMLHATTASFVFLCILIHMT, AWMSGLVLYLLTIATAFLGYV, and FFVLHFILPFIGCIIIVLHIF. Heme b is bound by residues His-82 and His-96. Heme b contacts are provided by His-178 and His-192. His-197 contributes to the a ubiquinone binding site. Helical transmembrane passes span 219 to 239, 285 to 305, 323 to 343, and 347 to 367; these read MLMTDAKCLSYLIGLIFLQAA, GLLVFMSSLINLGLLSEIRAL, GWVIIWVYSMIFLIIIGSAIP, and YILYGRLATILYLTTGLVLCL.

It belongs to the cytochrome b family. In terms of assembly, the main subunits of complex b-c1 are: cytochrome b, cytochrome c1 and the Rieske protein. It depends on heme b as a cofactor.

It localises to the mitochondrion inner membrane. Component of the ubiquinol-cytochrome c reductase complex (complex III or cytochrome b-c1 complex) that is part of the mitochondrial respiratory chain. The b-c1 complex mediates electron transfer from ubiquinol to cytochrome c. Contributes to the generation of a proton gradient across the mitochondrial membrane that is then used for ATP synthesis. This is Cytochrome b (MT-CYB) from Toxoplasma gondii.